Reading from the N-terminus, the 333-residue chain is Potassium channel protein 1 (333 aa).

Residues 1–6 (METYEK) are Cytoplasmic-facing. Residues 7-27 (IELGIIVIILLILIESVILMT) form a helical membrane-spanning segment. The Extracellular portion of the chain corresponds to 28–60 (VEGWDFFTAFYTAVVTISTVGYGDYTPQTFLGK). A Selectivity filter motif is present at residues 46–51 (TVGYGD). A helical transmembrane segment spans residues 61–81 (LSVIIYIFAGVGAVAYTMGNI). The Cytoplasmic portion of the chain corresponds to 82 to 333 (ASFFIEGHFR…KLKRYVEGVE (252 aa)). Residues 107–229 (NNHYIICGYG…GADRAVCPYI (123 aa)) enclose the RCK N-terminal domain. An RCK C-terminal domain is found at 246 to 331 (EFIHSLVATE…LEKLKRYVEG (86 aa)).

Homotetramer.

Its subcellular location is the cell membrane. Functionally, potassium channel protein. Seems to conduct potassium at low membrane potentials. This is Potassium channel protein 1 from Methanocaldococcus jannaschii (strain ATCC 43067 / DSM 2661 / JAL-1 / JCM 10045 / NBRC 100440) (Methanococcus jannaschii).